Consider the following 214-residue polypeptide: Ribosomal protein uL16-like (214 aa).

It belongs to the universal ribosomal protein uL16 family. Component of a male germ cell-specific 60S large ribosomal subunit (LSU), which contains RPL10L and RPL39L, instead of RPL10 and RPL39 paralogs. The composition of the rest of the complex is similar to classical ribosomes. Almost testis-specific. Also expressed in pre- and postmenopausal ovary.

The protein resides in the cytoplasm. In terms of biological role, testis-specific component of the ribosome, which is required for the transition from prophase to metaphase in male meiosis I. Compensates for the inactivated X-linked RPL10 paralog during spermatogenesis. The ribosome is a large ribonucleoprotein complex responsible for the synthesis of proteins in the cell. The male germ cell-specific ribosome displays a ribosomal polypeptide exit tunnel of distinct size and charge states compared with the classical ribosome. It is responsible for regulating the biosynthesis and folding of a subset of male germ-cell-specific proteins that are essential for the formation of sperm. The polypeptide is Ribosomal protein uL16-like (Homo sapiens (Human)).